Here is a 509-residue protein sequence, read N- to C-terminus: Lysine--tRNA ligase (509 aa).

Residues Glu418 and Glu425 each contribute to the Mg(2+) site.

This sequence belongs to the class-II aminoacyl-tRNA synthetase family. As to quaternary structure, homodimer. Mg(2+) is required as a cofactor.

It is found in the cytoplasm. It carries out the reaction tRNA(Lys) + L-lysine + ATP = L-lysyl-tRNA(Lys) + AMP + diphosphate. The chain is Lysine--tRNA ligase from Acinetobacter baumannii (strain ATCC 17978 / DSM 105126 / CIP 53.77 / LMG 1025 / NCDC KC755 / 5377).